A 664-amino-acid chain; its full sequence is Protein fem-1 homolog CG6966 (664 aa).

ANK repeat units follow at residues 40–70, 82–111, 115–144, 148–177, 181–210, and 213–242; these read NGATPLVISCRNGHYDIVEYLLTKCRANVEQ, EDAPPLWCAAAAGHLGIVKMLVRRGANVNS, TNSTPLRAACFDGHYEIVKYLVHHGADFEV, HGHTCLMIACYKGHFRIAQYLLSLNADVNR, KGNTALHDCAESGSLQILQLLLKHGATMDV, and YGMTPLLAASVTGHMPIVEHLITLPCVSRE. TPR repeat units follow at residues 245–279 and 335–368; these read IHALELLGATYVDRKRDMAAALNLWRRALEERAVE and SYYIRFRGAHYADAGRFDRCIELWSYALTMQQKI. Positions 433-460 are disordered; that stretch reads QQKDQQHPQKQLPAADKSPSCSASSSAS. The segment covering 450 to 460 has biased composition (low complexity); it reads SPSCSASSSAS. 2 ANK repeats span residues 529–571 and 575–605; these read FDRT…DPNA and AGNTPLHLATMQPYVEPLSHILLEGGAHLDT.

This sequence belongs to the fem-1 family. As to quaternary structure, component of a CRL2 E3 ubiquitin-protein ligase complex, also named ECS (Elongin BC-CUL2/5-SOCS-box protein) complex.

Its pathway is protein modification; protein ubiquitination. Substrate-recognition component of a Cul2-RING (CRL2) E3 ubiquitin-protein ligase complex of the DesCEND (destruction via C-end degrons) pathway, which recognizes a C-degron located at the extreme C terminus of target proteins, leading to their ubiquitination and degradation. The C-degron recognized by the DesCEND pathway is usually a motif of less than ten residues and can be present in full-length proteins, truncated proteins or proteolytically cleaved forms. In Drosophila melanogaster (Fruit fly), this protein is Protein fem-1 homolog CG6966.